The sequence spans 953 residues: Isoleucine--tRNA ligase (953 aa).

A 'HIGH' region motif is present at residues 58–68; the sequence is PYANGSIHIGH. Glu-577 provides a ligand contact to L-isoleucyl-5'-AMP. Positions 618 to 622 match the 'KMSKS' region motif; sequence KMSKS. Lys-621 is an ATP binding site. Cys-916, Cys-919, Cys-936, and Cys-939 together coordinate Zn(2+).

The protein belongs to the class-I aminoacyl-tRNA synthetase family. IleS type 1 subfamily. As to quaternary structure, monomer. Zn(2+) serves as cofactor.

The protein localises to the cytoplasm. It carries out the reaction tRNA(Ile) + L-isoleucine + ATP = L-isoleucyl-tRNA(Ile) + AMP + diphosphate. In terms of biological role, catalyzes the attachment of isoleucine to tRNA(Ile). As IleRS can inadvertently accommodate and process structurally similar amino acids such as valine, to avoid such errors it has two additional distinct tRNA(Ile)-dependent editing activities. One activity is designated as 'pretransfer' editing and involves the hydrolysis of activated Val-AMP. The other activity is designated 'posttransfer' editing and involves deacylation of mischarged Val-tRNA(Ile). This Aeromonas hydrophila subsp. hydrophila (strain ATCC 7966 / DSM 30187 / BCRC 13018 / CCUG 14551 / JCM 1027 / KCTC 2358 / NCIMB 9240 / NCTC 8049) protein is Isoleucine--tRNA ligase.